Here is a 326-residue protein sequence, read N- to C-terminus: rRNA 2'-O-methyltransferase fibrillarin (326 aa).

The disordered stretch occupies residues 1 to 84 (MAFQPGSRGG…GGARGGAKGG (84 aa)). Residues 7-83 (SRGGRGGARG…RGGARGGAKG (77 aa)) show a composition bias toward gly residues. An asymmetric dimethylarginine mark is found at Arg-8, Arg-11, Arg-15, Arg-19, Arg-23, Arg-26, Arg-32, Arg-36, Arg-39, Arg-45, Arg-49, Arg-55, Arg-59, Arg-63, Arg-67, Arg-71, Arg-74, and Arg-78. S-adenosyl-L-methionine-binding positions include 180–181 (TS), 199–200 (EF), 224–225 (DA), and 244–247 (DVAQ).

This sequence belongs to the methyltransferase superfamily. Fibrillarin family. As to quaternary structure, component of box C/D small nucleolar ribonucleoprotein (snoRNP) particles that contain SNU13, NOP1, SIK1/NOP56 and NOP58, plus a guide RNA. By homology to other fibrillarins, some or all of the N-terminal domain arginines are modified to asymmetric dimethylarginine (DMA).

The protein resides in the nucleus. It is found in the nucleolus. The catalysed reaction is L-glutaminyl-[histone H2A] + S-adenosyl-L-methionine = N(5)-methyl-L-glutaminyl-[histone H2A] + S-adenosyl-L-homocysteine + H(+). Functionally, S-adenosyl-L-methionine-dependent methyltransferase that has the ability to methylate both RNAs and proteins. Involved in pre-rRNA processing. Utilizes the methyl donor S-adenosyl-L-methionine to catalyze the site-specific 2'-hydroxyl methylation of ribose moieties in pre-ribosomal RNA. Site specificity is provided by a guide RNA that base pairs with the substrate. Methylation occurs at a characteristic distance from the sequence involved in base pairing with the guide RNA. Also acts as a protein methyltransferase by mediating methylation of 'Gln-105' of histone H2A (H2AQ105me), a modification that impairs binding of the FACT complex and is specifically present at 35S ribosomal DNA locus. In Eremothecium gossypii (strain ATCC 10895 / CBS 109.51 / FGSC 9923 / NRRL Y-1056) (Yeast), this protein is rRNA 2'-O-methyltransferase fibrillarin (NOP1).